The following is a 268-amino-acid chain: uncharacterized protein (268 aa).

A run of 4 helical transmembrane segments spans residues 32–52 (SLLL…IFFI), 70–90 (VFVG…AFLF), 125–145 (GVSS…FYIF), and 237–257 (IKYI…AYLT).

It belongs to the CbiQ family.

The protein resides in the cell membrane. This is an uncharacterized protein from Methanocaldococcus jannaschii (strain ATCC 43067 / DSM 2661 / JAL-1 / JCM 10045 / NBRC 100440) (Methanococcus jannaschii).